We begin with the raw amino-acid sequence, 537 residues long: [Pyruvate dehydrogenase [acetyl-transferring]]-phosphatase 1, mitochondrial (537 aa).

A mitochondrion-targeting transit peptide spans 1 to 71 (MPAPTQLFFP…WWHYTQGRRY (71 aa)). The region spanning 109–525 (ILGFDSNQLP…DDITIIVVQF (417 aa)) is the PPM-type phosphatase domain. Mn(2+) is bound by residues aspartate 144 and glycine 145. Lysine 202 is modified (N6-acetyllysine). Aspartate 418 and aspartate 516 together coordinate Mn(2+).

This sequence belongs to the PP2C family. In terms of assembly, heterodimer of a catalytic (PDP1) and a regulatory (PDPR) subunit. The cofactor is Mn(2+). Mg(2+) is required as a cofactor.

The protein localises to the mitochondrion. It catalyses the reaction O-phospho-L-seryl-[pyruvate dehydrogenase E1 alpha subunit] + H2O = L-seryl-[pyruvate dehydrogenase E1 alpha subunit] + phosphate. With respect to regulation, magnesium-dependent and calcium-stimulated. PDP1 activity strongly depends on its Ca(2+)-dependent binding to the lipoyl domain of E2 subunit of component of the pyruvate dehydrogenase complex. Mitochondrial enzyme that catalyzes the dephosphorylation and concomitant reactivation of the alpha subunit of the E1 component of the pyruvate dehydrogenase complex (PDC), thereby stimulating the conversion of pyruvate into acetyl-CoA. The protein is [Pyruvate dehydrogenase [acetyl-transferring]]-phosphatase 1, mitochondrial (PDP1) of Pongo abelii (Sumatran orangutan).